We begin with the raw amino-acid sequence, 441 residues long: GTPase Der (441 aa).

2 EngA-type G domains span residues 3–167 and 176–351; these read PLIA…PKGS and TKIA…EQFA. GTP-binding positions include 9 to 16, 56 to 60, 119 to 122, 182 to 189, 229 to 233, and 294 to 297; these read GRPNVGKS, DTGGF, NKID, DTAGI, and NKWD. In terms of domain architecture, KH-like spans 352–436; that stretch reads RRITTSDLNR…PMRLLFKGRE (85 aa).

Belongs to the TRAFAC class TrmE-Era-EngA-EngB-Septin-like GTPase superfamily. EngA (Der) GTPase family. Associates with the 50S ribosomal subunit.

In terms of biological role, GTPase that plays an essential role in the late steps of ribosome biogenesis. In Geotalea uraniireducens (strain Rf4) (Geobacter uraniireducens), this protein is GTPase Der.